Here is a 774-residue protein sequence, read N- to C-terminus: Lon protease 2 (774 aa).

The Lon N-terminal domain maps to 5–198; it reads YPLMPLRDIV…LLLEILFREL (194 aa). Residue 350-357 participates in ATP binding; it reads GPPGVGKT. Residues 588-769 form the Lon proteolytic domain; the sequence is RDEVGLATGL…DQVLEQALLS (182 aa). Catalysis depends on residues serine 675 and lysine 718.

This sequence belongs to the peptidase S16 family. As to quaternary structure, homohexamer. Organized in a ring with a central cavity.

Its subcellular location is the cytoplasm. The catalysed reaction is Hydrolysis of proteins in presence of ATP.. Its function is as follows. ATP-dependent serine protease that mediates the selective degradation of mutant and abnormal proteins as well as certain short-lived regulatory proteins. Required for cellular homeostasis and for survival from DNA damage and developmental changes induced by stress. Degrades polypeptides processively to yield small peptide fragments that are 5 to 10 amino acids long. Binds to DNA in a double-stranded, site-specific manner. This is Lon protease 2 from Desulfotalea psychrophila (strain LSv54 / DSM 12343).